The following is a 353-amino-acid chain: Protein pelota homolog (353 aa).

Belongs to the eukaryotic release factor 1 family. Pelota subfamily. Monomer. The cofactor is a divalent metal cation.

The protein resides in the cytoplasm. Functionally, may function in recognizing stalled ribosomes, interact with stem-loop structures in stalled mRNA molecules, and effect endonucleolytic cleavage of the mRNA. May play a role in the release non-functional ribosomes and degradation of damaged mRNAs. Has endoribonuclease activity. This Methanothermobacter thermautotrophicus (strain ATCC 29096 / DSM 1053 / JCM 10044 / NBRC 100330 / Delta H) (Methanobacterium thermoautotrophicum) protein is Protein pelota homolog.